The following is a 182-amino-acid chain: ATP synthase subunit delta (182 aa).

The protein belongs to the ATPase delta chain family. In terms of assembly, F-type ATPases have 2 components, F(1) - the catalytic core - and F(0) - the membrane proton channel. F(1) has five subunits: alpha(3), beta(3), gamma(1), delta(1), epsilon(1). F(0) has three main subunits: a(1), b(2) and c(10-14). The alpha and beta chains form an alternating ring which encloses part of the gamma chain. F(1) is attached to F(0) by a central stalk formed by the gamma and epsilon chains, while a peripheral stalk is formed by the delta and b chains.

It localises to the cell inner membrane. Functionally, f(1)F(0) ATP synthase produces ATP from ADP in the presence of a proton or sodium gradient. F-type ATPases consist of two structural domains, F(1) containing the extramembraneous catalytic core and F(0) containing the membrane proton channel, linked together by a central stalk and a peripheral stalk. During catalysis, ATP synthesis in the catalytic domain of F(1) is coupled via a rotary mechanism of the central stalk subunits to proton translocation. This protein is part of the stalk that links CF(0) to CF(1). It either transmits conformational changes from CF(0) to CF(1) or is implicated in proton conduction. This Persephonella marina (strain DSM 14350 / EX-H1) protein is ATP synthase subunit delta.